The sequence spans 375 residues: Queuine tRNA-ribosyltransferase (375 aa).

Aspartate 89 functions as the Proton acceptor in the catalytic mechanism. Residues 89–93, aspartate 143, glutamine 187, and glycine 214 contribute to the substrate site; that span reads DSGGF. The tract at residues 245-251 is RNA binding; that stretch reads GVGKPED. Aspartate 264 functions as the Nucleophile in the catalytic mechanism. Residues 269–273 are RNA binding; important for wobble base 34 recognition; that stretch reads TRNAR. The Zn(2+) site is built by cysteine 302, cysteine 304, cysteine 307, and histidine 333.

The protein belongs to the queuine tRNA-ribosyltransferase family. As to quaternary structure, homodimer. Within each dimer, one monomer is responsible for RNA recognition and catalysis, while the other monomer binds to the replacement base PreQ1. Requires Zn(2+) as cofactor.

The enzyme catalyses 7-aminomethyl-7-carbaguanine + guanosine(34) in tRNA = 7-aminomethyl-7-carbaguanosine(34) in tRNA + guanine. Its pathway is tRNA modification; tRNA-queuosine biosynthesis. Functionally, catalyzes the base-exchange of a guanine (G) residue with the queuine precursor 7-aminomethyl-7-deazaguanine (PreQ1) at position 34 (anticodon wobble position) in tRNAs with GU(N) anticodons (tRNA-Asp, -Asn, -His and -Tyr). Catalysis occurs through a double-displacement mechanism. The nucleophile active site attacks the C1' of nucleotide 34 to detach the guanine base from the RNA, forming a covalent enzyme-RNA intermediate. The proton acceptor active site deprotonates the incoming PreQ1, allowing a nucleophilic attack on the C1' of the ribose to form the product. After dissociation, two additional enzymatic reactions on the tRNA convert PreQ1 to queuine (Q), resulting in the hypermodified nucleoside queuosine (7-(((4,5-cis-dihydroxy-2-cyclopenten-1-yl)amino)methyl)-7-deazaguanosine). This Salmonella arizonae (strain ATCC BAA-731 / CDC346-86 / RSK2980) protein is Queuine tRNA-ribosyltransferase.